Here is a 365-residue protein sequence, read N- to C-terminus: Chorismate synthase (365 aa).

Arginine 48 provides a ligand contact to NADP(+). FMN contacts are provided by residues arginine 125 to serine 127, asparagine 238 to alanine 239, glycine 278, lysine 293 to serine 297, and arginine 319.

This sequence belongs to the chorismate synthase family. Homotetramer. It depends on FMNH2 as a cofactor.

The enzyme catalyses 5-O-(1-carboxyvinyl)-3-phosphoshikimate = chorismate + phosphate. It participates in metabolic intermediate biosynthesis; chorismate biosynthesis; chorismate from D-erythrose 4-phosphate and phosphoenolpyruvate: step 7/7. In terms of biological role, catalyzes the anti-1,4-elimination of the C-3 phosphate and the C-6 proR hydrogen from 5-enolpyruvylshikimate-3-phosphate (EPSP) to yield chorismate, which is the branch point compound that serves as the starting substrate for the three terminal pathways of aromatic amino acid biosynthesis. This reaction introduces a second double bond into the aromatic ring system. The sequence is that of Chorismate synthase from Ruthia magnifica subsp. Calyptogena magnifica.